The chain runs to 657 residues: MAKETFYITTPIYYPSGNLHIGHAYSTVAGDVIARYKRMQGYDVRYLTGTDEHGQKIQEKAQKAGKTEIEYLDEMIAGIKQLWAKLEISNDDFIRTTEERHKHVVEQVFERLLKQGDIYLGEYEGWYSVPDETYYTESQLVDPQYENGKIIGGKSPDSGHEVELVKEESYFFNISKYTDRLLEFYDQNPDFIQPPSRKNEMINNFIKPGLADLAVSRTSFNWGVHVPSNPKHVVYVWIDALVNYISALGYLSDDESLFNKYWPADIHLMAKEIVRFHSIIWPILLMALDLPLPKKVFAHGWILMKDGKMSKSKGNVVDPNILIDRYGLDATRYYLMRELPFGSDGVFTPEAFVERTNFDLANDLGNLVNRTISMVNKYFDGELPAYQGPLHELDEEMEAMALETVKSYTESMESLQFSVALSTVWKFISRTNKYIDETTPWVLAKDDSQKDMLGNVMAHLVENIRYAAVLLRPFLTHAPKEIFEQLNINNPQFMEFSSLEQYGVLTESIMVTGQPKPIFPRLDSEAEIAYIKESMQPPATEEEKEEIPSKPQIDIKDFDKVEIKAATIIDAEHVKKSDKLLKIQVDLDSEQRQIVSGIAKFYTPDDIIGKKVAVVTNLKPAKLMGQKSEGMILSAEKDGVLTLVSLPSAIPNGAVIK.

Residues 13–23 (YYPSGNLHIGH) carry the 'HIGH' region motif. The short motif at 308–312 (KMSKS) is the 'KMSKS' region element. Residue Lys-311 participates in ATP binding. One can recognise a tRNA-binding domain in the interval 557–657 (DFDKVEIKAA…SAIPNGAVIK (101 aa)).

The protein belongs to the class-I aminoacyl-tRNA synthetase family. MetG type 2B subfamily. In terms of assembly, homodimer.

The protein resides in the cytoplasm. It catalyses the reaction tRNA(Met) + L-methionine + ATP = L-methionyl-tRNA(Met) + AMP + diphosphate. Its function is as follows. Is required not only for elongation of protein synthesis but also for the initiation of all mRNA translation through initiator tRNA(fMet) aminoacylation. The protein is Methionine--tRNA ligase of Staphylococcus aureus (strain Mu50 / ATCC 700699).